Here is a 143-residue protein sequence, read N- to C-terminus: Small ribosomal subunit protein eS19B (143 aa).

The protein belongs to the eukaryotic ribosomal protein eS19 family. In terms of assembly, component of the small ribosomal subunit (SSU). Mature yeast ribosomes consist of a small (40S) and a large (60S) subunit. The 40S small subunit contains 1 molecule of ribosomal RNA (18S rRNA) and at least 33 different proteins. The large 60S subunit contains 3 rRNA molecules (25S, 5.8S and 5S rRNA) and at least 46 different proteins.

The protein resides in the cytoplasm. It localises to the nucleus. Component of the ribosome, a large ribonucleoprotein complex responsible for the synthesis of proteins in the cell. The small ribosomal subunit (SSU) binds messenger RNAs (mRNAs) and translates the encoded message by selecting cognate aminoacyl-transfer RNA (tRNA) molecules. The large subunit (LSU) contains the ribosomal catalytic site termed the peptidyl transferase center (PTC), which catalyzes the formation of peptide bonds, thereby polymerizing the amino acids delivered by tRNAs into a polypeptide chain. The nascent polypeptides leave the ribosome through a tunnel in the LSU and interact with protein factors that function in enzymatic processing, targeting, and the membrane insertion of nascent chains at the exit of the ribosomal tunnel. eS19 is required for proper maturation of the small (40S) ribosomal subunit. Binds to 40S pre-ribosomal particles, probably required after association of NOC4 but before association of ENP1, TSR1 and RIO2 with 20/21S pre-rRNA. The protein is Small ribosomal subunit protein eS19B (rps1902) of Schizosaccharomyces pombe (strain 972 / ATCC 24843) (Fission yeast).